Reading from the N-terminus, the 289-residue chain is MSNAKEIRSQIKSVKSTQKITKAMEMVAASKVRRVQNYMRGGRPYAEHIQRVIAHLVRASSSTLHPFLVKPEKVETVGYIVISTDRGLCGGLNINLFKTLWQHICGEQKKGHKIVATVFGRKGVAFLNRAQVPLLSTIENYPEEPQTHELIGAIYPMIEGFNRGEIQKIYIVGNVFENAMTQKPTITQLLPASVQFADGMTAKHAWDYIYEPNAESILDTLLKRYLEFTVKQAVAENIACEMSARMLAMKSASDNAGALIKELQLKYNKARQTAITQELTEIVAGADAV.

Belongs to the ATPase gamma chain family. F-type ATPases have 2 components, CF(1) - the catalytic core - and CF(0) - the membrane proton channel. CF(1) has five subunits: alpha(3), beta(3), gamma(1), delta(1), epsilon(1). CF(0) has three main subunits: a, b and c.

It localises to the cell inner membrane. In terms of biological role, produces ATP from ADP in the presence of a proton gradient across the membrane. The gamma chain is believed to be important in regulating ATPase activity and the flow of protons through the CF(0) complex. The chain is ATP synthase gamma chain from Dichelobacter nodosus (strain VCS1703A).